Reading from the N-terminus, the 565-residue chain is O-fucosyltransferase 7 (565 aa).

The helical; Signal-anchor for type II membrane protein transmembrane segment at 17–37 threads the bilayer; that stretch reads VLIWAICVMTLLCFLTVHIYV. N-linked (GlcNAc...) asparagine glycans are attached at residues N62, N73, N104, N124, and N190. 327-329 lines the substrate pocket; it reads HLR. A glycan (N-linked (GlcNAc...) asparagine) is linked at N441. The interval 515-565 is disordered; the sequence is NEIHKTRQGSPRRRKGPASGTKGLERHRSEESFYENPLPDCLCQRDPSKAR. The segment covering 520-530 has biased composition (basic residues); it reads TRQGSPRRRKG.

The protein belongs to the glycosyltransferase GT106 family.

The protein localises to the membrane. It functions in the pathway glycan metabolism. The sequence is that of O-fucosyltransferase 7 from Arabidopsis thaliana (Mouse-ear cress).